A 106-amino-acid chain; its full sequence is Iron-sulfur cluster assembly protein CyaY (106 aa).

It belongs to the frataxin family.

In terms of biological role, involved in iron-sulfur (Fe-S) cluster assembly. May act as a regulator of Fe-S biogenesis. This chain is Iron-sulfur cluster assembly protein CyaY, found in Dickeya chrysanthemi (Pectobacterium chrysanthemi).